Reading from the N-terminus, the 159-residue chain is Protein-export protein SecB (159 aa).

Belongs to the SecB family. As to quaternary structure, homotetramer, a dimer of dimers. One homotetramer interacts with 1 SecA dimer.

The protein localises to the cytoplasm. One of the proteins required for the normal export of preproteins out of the cell cytoplasm. It is a molecular chaperone that binds to a subset of precursor proteins, maintaining them in a translocation-competent state. It also specifically binds to its receptor SecA. The sequence is that of Protein-export protein SecB from Hahella chejuensis (strain KCTC 2396).